Reading from the N-terminus, the 242-residue chain is MEGWQRAFVLHSRPWSETSLMLDVFTEESGRVRLVAKGARSKRSNLKGALQPFTPLLLRYSGRGEVKTLRSAEAVSLALPLSGITLYSGLYINELLSRVLEYETRFSELFFDYLNCIQALAGTTGSPEPALRRFELALLGHLGYGVNFTHCAGSGERVDDTMTYRYREEKGFFASVVIDNNTFTGRHLKALEAREFPDVDTLRAAKRFTRMALKPYLGGKPLKSRELFRQFMPKRTVKTKKD.

The protein belongs to the RecO family. In terms of assembly, monomer.

In terms of biological role, involved in DNA repair and RecF pathway recombination. The polypeptide is DNA repair protein RecO (Salmonella agona (strain SL483)).